The chain runs to 457 residues: Siroheme synthase (457 aa).

A precorrin-2 dehydrogenase /sirohydrochlorin ferrochelatase region spans residues 1 to 204 (MDHLPIFCQL…NDQKAITETT (204 aa)). Residues 22-23 (DV) and 43-44 (LA) contribute to the NAD(+) site. S128 carries the post-translational modification Phosphoserine. Residues 216-457 (GEVVLVGAGP…RDKLNWFSNH (242 aa)) are uroporphyrinogen-III C-methyltransferase. Residue P225 coordinates S-adenosyl-L-methionine. D248 (proton acceptor) is an active-site residue. K270 serves as the catalytic Proton donor. Residues 301 to 303 (GGD), I306, 331 to 332 (TA), M382, and G411 each bind S-adenosyl-L-methionine.

The protein in the N-terminal section; belongs to the precorrin-2 dehydrogenase / sirohydrochlorin ferrochelatase family. This sequence in the C-terminal section; belongs to the precorrin methyltransferase family.

The catalysed reaction is uroporphyrinogen III + 2 S-adenosyl-L-methionine = precorrin-2 + 2 S-adenosyl-L-homocysteine + H(+). It catalyses the reaction precorrin-2 + NAD(+) = sirohydrochlorin + NADH + 2 H(+). The enzyme catalyses siroheme + 2 H(+) = sirohydrochlorin + Fe(2+). The protein operates within cofactor biosynthesis; adenosylcobalamin biosynthesis; precorrin-2 from uroporphyrinogen III: step 1/1. It functions in the pathway cofactor biosynthesis; adenosylcobalamin biosynthesis; sirohydrochlorin from precorrin-2: step 1/1. Its pathway is porphyrin-containing compound metabolism; siroheme biosynthesis; precorrin-2 from uroporphyrinogen III: step 1/1. It participates in porphyrin-containing compound metabolism; siroheme biosynthesis; siroheme from sirohydrochlorin: step 1/1. The protein operates within porphyrin-containing compound metabolism; siroheme biosynthesis; sirohydrochlorin from precorrin-2: step 1/1. Functionally, multifunctional enzyme that catalyzes the SAM-dependent methylations of uroporphyrinogen III at position C-2 and C-7 to form precorrin-2 via precorrin-1. Then it catalyzes the NAD-dependent ring dehydrogenation of precorrin-2 to yield sirohydrochlorin. Finally, it catalyzes the ferrochelation of sirohydrochlorin to yield siroheme. The protein is Siroheme synthase of Escherichia coli O157:H7 (strain EC4115 / EHEC).